The following is a 395-amino-acid chain: Elongation factor Tu (395 aa).

Residues 6–205 enclose the tr-type G domain; sequence KPHINVGTIG…NALEKISLPT (200 aa). The tract at residues 15 to 22 is G1; that stretch reads GHVDHGKT. 15–22 lines the GTP pocket; it reads GHVDHGKT. Thr-22 serves as a coordination point for Mg(2+). The tract at residues 59 to 63 is G2; that stretch reads GITIS. The segment at 80-83 is G3; sequence DCPG. GTP-binding positions include 80–84 and 135–138; these read DCPGH and NKCD. Residues 135-138 are G4; that stretch reads NKCD. A G5 region spans residues 173–175; sequence SAV.

Belongs to the TRAFAC class translation factor GTPase superfamily. Classic translation factor GTPase family. EF-Tu/EF-1A subfamily. As to quaternary structure, monomer.

It localises to the cytoplasm. The enzyme catalyses GTP + H2O = GDP + phosphate + H(+). Its function is as follows. GTP hydrolase that promotes the GTP-dependent binding of aminoacyl-tRNA to the A-site of ribosomes during protein biosynthesis. In Ehrlichia chaffeensis (strain ATCC CRL-10679 / Arkansas), this protein is Elongation factor Tu.